The following is a 506-amino-acid chain: Steroid (22S)-hydroxylase (506 aa).

Residues 12–32 (LLFFLPFILLALLTFYTTTVA) form a helical membrane-spanning segment. Heme is bound at residue cysteine 449.

It belongs to the cytochrome P450 family. Requires heme as cofactor.

Its subcellular location is the membrane. It carries out the reaction a C28-steroid + reduced [NADPH--hemoprotein reductase] + O2 = a (22S)-22-hydroxy C28-steroid + oxidized [NADPH--hemoprotein reductase] + H2O + H(+). The catalysed reaction is campesterol + reduced [NADPH--hemoprotein reductase] + O2 = (22S)-22-hydroxycampesterol + oxidized [NADPH--hemoprotein reductase] + H2O + H(+). The enzyme catalyses campestanol + reduced [NADPH--hemoprotein reductase] + O2 = 6-deoxycathasterone + oxidized [NADPH--hemoprotein reductase] + H2O + H(+). It participates in plant hormone biosynthesis; brassinosteroid biosynthesis. Catalyzes the C22-alpha-hydroxylation step in brassinosteroid biosynthesis, which is the rate-limiting step in this biosynthetic pathway. Catalyzes the conversion of campesterol (CR) to (22S)-22-hydroxycampesterol (22-OHCR, 22-hydroxyCR) and of campestanol (CN) to 6-deoxocathasterone (6-deoxoCT). This Oryza sativa subsp. indica (Rice) protein is Steroid (22S)-hydroxylase.